Reading from the N-terminus, the 341-residue chain is Ribosomal RNA small subunit methyltransferase C (341 aa).

Belongs to the methyltransferase superfamily. RsmC family. Monomer.

The protein localises to the cytoplasm. The catalysed reaction is guanosine(1207) in 16S rRNA + S-adenosyl-L-methionine = N(2)-methylguanosine(1207) in 16S rRNA + S-adenosyl-L-homocysteine + H(+). Its function is as follows. Specifically methylates the guanine in position 1207 of 16S rRNA in the 30S particle. The polypeptide is Ribosomal RNA small subunit methyltransferase C (Shewanella halifaxensis (strain HAW-EB4)).